The chain runs to 150 residues: MGHLDKEGLCTQGSSFSWLLRVLNDGISLGLTPCLWDMYLLEGEQMLMLITSIAFKVQRSLYEETNKETWGPATPRALKGTGRARPICESLHSSLQALTASESSRGPSLLQTPPRVPGQQALSRGDKGISVSLSLPSLPSRRGRCGRIIG.

A Rab-GAP TBC; truncated domain is found at M1–G43. The segment covering E102–Q111 has biased composition (polar residues). A disordered region spans residues E102 to G125.

The polypeptide is Putative TBC1 domain family member 29 (Homo sapiens (Human)).